Consider the following 459-residue polypeptide: Zinc finger protein ZPR1 (459 aa).

Residues 1-29 (MSAGGAVEPGLPAAAAAPSAAPARDPGPG) are compositionally biased toward low complexity. Residues 1–43 (MSAGGAVEPGLPAAAAAPSAAPARDPGPGHLFRPISAEDEEQQ) are disordered. 2 consecutive C4-type zinc fingers follow at residues 51 to 83 (CMNC…CEHC) and 259 to 291 (CPEC…CENC). The tract at residues 438–459 (NEELGLNDMKTEGYETGLPAQR) is disordered.

Belongs to the ZPR1 family. As to quaternary structure, component of an import snRNP complex composed of KPNB1, SNUPN, SMN1 and ZNF259. Interacts (via C-terminal region) with SMN1 (via C-terminal region); the interaction occurs after treatment with serum. Interacts with elongation factor 1-alpha EEF1A1; the interaction occurs in a epidermal growth factor (EGF)-dependent manner. Interacts (via zinc fingers) with EGFR (via C-terminal cytoplasmic kinase domain); the interaction is negatively regulated in response to epidermal growth factor (EGF) stimulation and EGFR kinase activity. May also bind to the PDGFR receptor.

The protein localises to the nucleus. It localises to the cytoplasm. Its subcellular location is the nucleolus. The protein resides in the perinuclear region. It is found in the gem. The protein localises to the cajal body. It localises to the cell projection. Its subcellular location is the axon. The protein resides in the growth cone. Acts as a signaling molecule that communicates proliferative growth signals from the cytoplasm to the nucleus. Plays a role for the localization and accumulation of the survival motor neuron protein SMN1 in sub-nuclear bodies, including gems and Cajal bodies. Induces neuron differentiation and stimulates axonal growth and formation of growth cone in spinal cord motor neurons. Plays a role in the splicing of cellular pre-mRNAs. May be involved in H(2)O(2)-induced neuronal cell death. This chain is Zinc finger protein ZPR1 (ZNF259), found in Bos taurus (Bovine).